The sequence spans 168 residues: uncharacterized protein (168 aa).

A signal peptide spans 1-21; it reads MVYEVLAVVSGGLLGFGVTWA.

This is an uncharacterized protein from Archaeoglobus fulgidus (strain ATCC 49558 / DSM 4304 / JCM 9628 / NBRC 100126 / VC-16).